A 145-amino-acid polypeptide reads, in one-letter code: U20-hexatoxin-Hi1a (145 aa).

A signal peptide spans 1 to 16 (MYQFLIIVILAAFVNG). Thyroglobulin type-1 domains follow at residues 20–73 (KTEC…GQPM) and 82–145 (ACEC…RLEC). 5 disulfides stabilise this stretch: cysteine 23-cysteine 45, cysteine 56-cysteine 63, cysteine 85-cysteine 106, cysteine 117-cysteine 124, and cysteine 126-cysteine 145.

As to expression, expressed by the venom gland.

The protein resides in the secreted. Its function is as follows. Cysteine proteinase inhibitor. The chain is U20-hexatoxin-Hi1a from Hadronyche infensa (Fraser island funnel-web spider).